Consider the following 265-residue polypeptide: Glutamate racemase (265 aa).

Residues 7-8 (DS) and 39-40 (YG) each bind substrate. Cys70 functions as the Proton donor/acceptor in the catalytic mechanism. 71-72 (NT) contacts substrate. Residue Cys177 is the Proton donor/acceptor of the active site.

The protein belongs to the aspartate/glutamate racemases family.

The enzyme catalyses L-glutamate = D-glutamate. It functions in the pathway cell wall biogenesis; peptidoglycan biosynthesis. Provides the (R)-glutamate required for cell wall biosynthesis. This is Glutamate racemase from Prochlorococcus marinus (strain NATL1A).